Reading from the N-terminus, the 312-residue chain is Ribonuclease H2 subunit B (312 aa).

Alanine 2 carries the N-acetylalanine modification. Residues 236 to 256 (EPSASLPNPPSKKIKLSDEPV) form a disordered region. Lysine 295 bears the N6-acetyllysine mark. Serine 296 is subject to Phosphoserine.

The protein belongs to the RNase H2 subunit B family. The RNase H2 complex is a heterotrimer composed of the catalytic subunit RNASEH2A and the non-catalytic subunits RNASEH2B and RNASEH2C. Widely expressed.

It localises to the nucleus. In terms of biological role, non catalytic subunit of RNase H2, an endonuclease that specifically degrades the RNA of RNA:DNA hybrids. Participates in DNA replication, possibly by mediating the removal of lagging-strand Okazaki fragment RNA primers during DNA replication. Mediates the excision of single ribonucleotides from DNA:RNA duplexes. This is Ribonuclease H2 subunit B (RNASEH2B) from Homo sapiens (Human).